A 69-amino-acid polypeptide reads, in one-letter code: UPF0150 protein AF_1072 (69 aa).

It belongs to the UPF0150 family.

The polypeptide is UPF0150 protein AF_1072 (Archaeoglobus fulgidus (strain ATCC 49558 / DSM 4304 / JCM 9628 / NBRC 100126 / VC-16)).